A 211-amino-acid chain; its full sequence is Large ribosomal subunit protein bL25 (211 aa).

The interval 188 to 211 is disordered; that stretch reads HREEEKAPEETGEAAPAPTPETGQ. Positions 200–211 are enriched in low complexity; that stretch reads EAAPAPTPETGQ.

Belongs to the bacterial ribosomal protein bL25 family. CTC subfamily. In terms of assembly, part of the 50S ribosomal subunit; part of the 5S rRNA/L5/L18/L25 subcomplex. Contacts the 5S rRNA. Binds to the 5S rRNA independently of L5 and L18.

In terms of biological role, this is one of the proteins that binds to the 5S RNA in the ribosome where it forms part of the central protuberance. In Desulforudis audaxviator (strain MP104C), this protein is Large ribosomal subunit protein bL25.